Reading from the N-terminus, the 430-residue chain is Serine--tRNA ligase (430 aa).

237–239 is a binding site for L-serine; it reads TAE. Position 268–270 (268–270) interacts with ATP; that stretch reads RSE. Glu291 contributes to the L-serine binding site. 355 to 358 provides a ligand contact to ATP; sequence EISS. Ser391 contacts L-serine.

It belongs to the class-II aminoacyl-tRNA synthetase family. Type-1 seryl-tRNA synthetase subfamily. As to quaternary structure, homodimer. The tRNA molecule binds across the dimer.

The protein resides in the cytoplasm. It catalyses the reaction tRNA(Ser) + L-serine + ATP = L-seryl-tRNA(Ser) + AMP + diphosphate + H(+). The enzyme catalyses tRNA(Sec) + L-serine + ATP = L-seryl-tRNA(Sec) + AMP + diphosphate + H(+). It participates in aminoacyl-tRNA biosynthesis; selenocysteinyl-tRNA(Sec) biosynthesis; L-seryl-tRNA(Sec) from L-serine and tRNA(Sec): step 1/1. Its function is as follows. Catalyzes the attachment of serine to tRNA(Ser). Is also able to aminoacylate tRNA(Sec) with serine, to form the misacylated tRNA L-seryl-tRNA(Sec), which will be further converted into selenocysteinyl-tRNA(Sec). The protein is Serine--tRNA ligase of Salmonella paratyphi C (strain RKS4594).